Here is a 114-residue protein sequence, read N- to C-terminus: Chaperone protein YscY (114 aa).

Binds to YscX.

The protein localises to the cytoplasm. Required for Yop secretion. Functions probably as a chaperone which stabilizes YscX within the cell, before its secretion. The chain is Chaperone protein YscY (yscY) from Yersinia enterocolitica.